We begin with the raw amino-acid sequence, 654 residues long: Collagen alpha-1(XXV) chain (654 aa).

The segment at 1–26 (MLLKKHAGKGGGREPRSEDPTPAEQH) is disordered. Over 1-33 (MLLKKHAGKGGGREPRSEDPTPAEQHCARTMPP) the chain is Cytoplasmic. A helical; Signal-anchor for type II membrane protein transmembrane segment spans residues 34 to 54 (CAVLAALLSVVAVVSCLYLGV). Topologically, residues 55–654 (KTNDLQARIA…GLPMPGCWQK (600 aa)) are extracellular. A Pyrrolidone carboxylic acid (Glu) modification is found at Glu-113. The segment at 116 to 168 (SECNCPAGPPGKRGKRGRRGESGPPGQPGPQGPPGPKGDKGEQGDQGPRMVFP) is disordered. The region spanning 121–164 (PAGPPGKRGKRGRRGESGPPGQPGPQGPPGPKGDKGEQGDQGPR) is the Collagen-like 1 domain. Residues 140–151 (PGQPGPQGPPGP) are compositionally biased toward pro residues. The interaction with amyloid-beta peptide stretch occupies residues 181–188 (LIKRRLIK). 2 disordered regions span residues 189–426 (GDQG…QGAT) and 445–654 (LTVT…CWQK). 5 Collagen-like domains span residues 192–247 (GQAG…QKGS), 249–308 (GAPG…PGSS), 311–370 (GIKG…AGPP), 372–425 (RGER…DQGA), and 447–505 (VTGP…PGLP). Residues 196 to 208 (PPGPPGPPGPRGP) show a composition bias toward pro residues. Residues 230–245 (PGEQGLMGPLGPPGQK) show a composition bias toward low complexity. The segment covering 280 to 290 (EPGEQGEKGDA) has biased composition (basic and acidic residues). A compositionally biased stretch (low complexity) spans 336–358 (LPGIKGEPGFIGPQGEPGLPGLP). Composition is skewed to basic and acidic residues over residues 361–377 (KGERGEAGPPGRGERGE) and 398–407 (SKGDRGEKGD). Residues 457–466 (QGLQGPKGEQ) show a composition bias toward low complexity. The span at 494 to 503 (GEKGGIGLPG) shows a compositional bias: gly residues. The segment covering 517 to 527 (SGMPGPQGPSI) has biased composition (low complexity). Over residues 528-543 (IGPPGPPGPHGPPGPM) the composition is skewed to pro residues. One can recognise a Collagen-like 7 domain in the interval 571–630 (GEKGAMGEPGPRGPYGLPGKDGEPGLDGFPGPRGEKGDLGEKGEKGFRGVKGEKGEPGQP). The span at 603 to 626 (RGEKGDLGEKGEKGFRGVKGEKGE) shows a compositional bias: basic and acidic residues.

Forms homodimers and homotrimers. Binds to the fibrillized forms of amyloid-beta protein 40 (beta-APP40) and amyloid-beta protein 42 (beta-APP42). Found associated with beta-APP42 more frequently than with beta-APP40. In terms of processing, undergoes proteolytic cleavage by furin protease to yield the soluble collagen-like Alzheimer amyloid plaque component. Post-translationally, glycosylated. Hydroxylated on 11% of proline residues and 49% of lysine residues. Expressed predominantly in brain. Deposited preferentially in primitive or neuritic amyloid plaques which are typical of Alzheimer disease.

It is found in the membrane. Its function is as follows. Inhibits fibrillization of amyloid-beta peptide during the elongation phase. Has also been shown to assemble amyloid fibrils into protease-resistant aggregates. Binds heparin. The protein is Collagen alpha-1(XXV) chain of Homo sapiens (Human).